A 101-amino-acid polypeptide reads, in one-letter code: MARFTPLLMILLALVPLYYSLDCRKFSFAPACRGIMLKRSGGHPMIAEQQPMIDNAKAREVQMMELLIRNIEDEALIANSDCVSMSWLRDRLVNAKNEMPQ.

Positions 1–20 are cleaved as a signal peptide; that stretch reads MARFTPLLMILLALVPLYYS.

Post-translationally, may be degraded by the nep-2 peptidase. In terms of tissue distribution, expressed in coelomocytes, the ASK sensory neurons and interneurons AIB, AIM and PVQ.

Its subcellular location is the secreted. It localises to the perikaryon. Its function is as follows. Negatively regulates chemotaxis and olfactory plasticity which is the change from positive chemotaxis to dispersal after prolonged exposure to an odorant. May be down-regulated in response to pheromone exposure, resulting in promotion of olfactory plasticity. This Caenorhabditis elegans protein is Protein snet-1.